The following is a 1083-amino-acid chain: RecBCD enzyme subunit RecB (1083 aa).

The UvrD-like helicase ATP-binding domain maps to 1–323 (MKVFDLLGPL…QTLGTNWRSD (323 aa)). Residues 1–704 (MKVFDLLGPL…RGRAPGEAIV (704 aa)) are DNA-binding and helicase activity, interacts with RecC. 21-28 (ASAGTGKT) is a binding site for ATP. Positions 349 to 607 (VQARHQGHRL…QIMTVWVSKG (259 aa)) constitute a UvrD-like helicase C-terminal domain. The interval 765 to 1083 (AWKRTSYSGL…LSKLLDAEAP (319 aa)) is nuclease activity, interacts with RecD and RecA. Mg(2+) is bound by residues histidine 830, aspartate 962, and aspartate 975. The active-site For nuclease activity is aspartate 975.

This sequence belongs to the helicase family. UvrD subfamily. As to quaternary structure, heterotrimer of RecB, RecC and RecD. All subunits contribute to DNA-binding. Interacts with RecA. The cofactor is Mg(2+).

The catalysed reaction is Exonucleolytic cleavage (in the presence of ATP) in either 5'- to 3'- or 3'- to 5'-direction to yield 5'-phosphooligonucleotides.. It carries out the reaction Couples ATP hydrolysis with the unwinding of duplex DNA by translocating in the 3'-5' direction.. The enzyme catalyses ATP + H2O = ADP + phosphate + H(+). In terms of biological role, a helicase/nuclease that prepares dsDNA breaks (DSB) for recombinational DNA repair. Binds to DSBs and unwinds DNA via a highly rapid and processive ATP-dependent bidirectional helicase activity. Holoenzyme degrades any linearized DNA that is unable to undergo homologous recombination. In the holoenzyme this subunit contributes DNA-dependent ATPase activity, exonuclease activity and 3'-5' helicase activity. Unlike the case in E.coli, suppresses RecA-dependent homologous recombination, is instead required for single-strand annealing pathway repair of DSB. This chain is RecBCD enzyme subunit RecB, found in Mycolicibacterium smegmatis (strain ATCC 700084 / mc(2)155) (Mycobacterium smegmatis).